The sequence spans 150 residues: SsrA-binding protein (150 aa).

The protein belongs to the SmpB family.

It localises to the cytoplasm. Its function is as follows. Required for rescue of stalled ribosomes mediated by trans-translation. Binds to transfer-messenger RNA (tmRNA), required for stable association of tmRNA with ribosomes. tmRNA and SmpB together mimic tRNA shape, replacing the anticodon stem-loop with SmpB. tmRNA is encoded by the ssrA gene; the 2 termini fold to resemble tRNA(Ala) and it encodes a 'tag peptide', a short internal open reading frame. During trans-translation Ala-aminoacylated tmRNA acts like a tRNA, entering the A-site of stalled ribosomes, displacing the stalled mRNA. The ribosome then switches to translate the ORF on the tmRNA; the nascent peptide is terminated with the 'tag peptide' encoded by the tmRNA and targeted for degradation. The ribosome is freed to recommence translation, which seems to be the essential function of trans-translation. This Borrelia garinii subsp. bavariensis (strain ATCC BAA-2496 / DSM 23469 / PBi) (Borreliella bavariensis) protein is SsrA-binding protein.